We begin with the raw amino-acid sequence, 597 residues long: Elongation factor 4 (597 aa).

One can recognise a tr-type G domain in the interval 2–184 (KHIRNFSIIA…TIVKCIPAPE (183 aa)). GTP is bound by residues 14–19 (DHGKST) and 131–134 (NKID).

It belongs to the TRAFAC class translation factor GTPase superfamily. Classic translation factor GTPase family. LepA subfamily.

It is found in the cell inner membrane. It carries out the reaction GTP + H2O = GDP + phosphate + H(+). In terms of biological role, required for accurate and efficient protein synthesis under certain stress conditions. May act as a fidelity factor of the translation reaction, by catalyzing a one-codon backward translocation of tRNAs on improperly translocated ribosomes. Back-translocation proceeds from a post-translocation (POST) complex to a pre-translocation (PRE) complex, thus giving elongation factor G a second chance to translocate the tRNAs correctly. Binds to ribosomes in a GTP-dependent manner. In Aliivibrio salmonicida (strain LFI1238) (Vibrio salmonicida (strain LFI1238)), this protein is Elongation factor 4.